The primary structure comprises 347 residues: NADH-quinone oxidoreductase subunit H (347 aa).

Transmembrane regions (helical) follow at residues 13 to 33 (LLILLKSVALIVILLVGVAYI), 50 to 70 (PNVVGPWGLFQAFADLFKFVF), 82 to 102 (GVFLLAPVVAAGLALAAWAVI), 115 to 135 (VGILYVFAIASLEVYGVIMAG), 161 to 181 (IGFVIVTVLLAVGSLNLTDIV), 198 to 218 (FLDWHWLALFPMFIIFFISAL), 248 to 268 (FLLFFLGEYVAIVLMCALTTI), 286 to 306 (VPGVVWFVLKLVAVFFMFALV), and 321 to 341 (LGWKVFLPISLFMVVATAAFL).

It belongs to the complex I subunit 1 family. As to quaternary structure, NDH-1 is composed of 14 different subunits. Subunits NuoA, H, J, K, L, M, N constitute the membrane sector of the complex.

The protein localises to the cell inner membrane. It catalyses the reaction a quinone + NADH + 5 H(+)(in) = a quinol + NAD(+) + 4 H(+)(out). NDH-1 shuttles electrons from NADH, via FMN and iron-sulfur (Fe-S) centers, to quinones in the respiratory chain. The immediate electron acceptor for the enzyme in this species is believed to be ubiquinone. Couples the redox reaction to proton translocation (for every two electrons transferred, four hydrogen ions are translocated across the cytoplasmic membrane), and thus conserves the redox energy in a proton gradient. This subunit may bind ubiquinone. The chain is NADH-quinone oxidoreductase subunit H from Chelativorans sp. (strain BNC1).